The chain runs to 570 residues: Dihydroxy-acid dehydratase 2 (570 aa).

[2Fe-2S] cluster is bound at residue Cys-51. A Mg(2+)-binding site is contributed by Asp-83. Cys-124 lines the [2Fe-2S] cluster pocket. The Mg(2+) site is built by Asp-125 and Lys-126. Lys-126 is subject to N6-carboxylysine. Cys-196 is a [2Fe-2S] cluster binding site. Residue Glu-446 coordinates Mg(2+). The active-site Proton acceptor is the Ser-472.

It belongs to the IlvD/Edd family. As to quaternary structure, homodimer. [2Fe-2S] cluster serves as cofactor. Mg(2+) is required as a cofactor.

The catalysed reaction is (2R)-2,3-dihydroxy-3-methylbutanoate = 3-methyl-2-oxobutanoate + H2O. It carries out the reaction (2R,3R)-2,3-dihydroxy-3-methylpentanoate = (S)-3-methyl-2-oxopentanoate + H2O. It participates in amino-acid biosynthesis; L-isoleucine biosynthesis; L-isoleucine from 2-oxobutanoate: step 3/4. It functions in the pathway amino-acid biosynthesis; L-valine biosynthesis; L-valine from pyruvate: step 3/4. In terms of biological role, functions in the biosynthesis of branched-chain amino acids. Catalyzes the dehydration of (2R,3R)-2,3-dihydroxy-3-methylpentanoate (2,3-dihydroxy-3-methylvalerate) into 2-oxo-3-methylpentanoate (2-oxo-3-methylvalerate) and of (2R)-2,3-dihydroxy-3-methylbutanoate (2,3-dihydroxyisovalerate) into 2-oxo-3-methylbutanoate (2-oxoisovalerate), the penultimate precursor to L-isoleucine and L-valine, respectively. This chain is Dihydroxy-acid dehydratase 2, found in Bordetella bronchiseptica (strain ATCC BAA-588 / NCTC 13252 / RB50) (Alcaligenes bronchisepticus).